Reading from the N-terminus, the 291-residue chain is Protease HtpX homolog (291 aa).

A run of 2 helical transmembrane segments spans residues 4 to 24 and 39 to 59; these read IVLF…TMRL and TSLL…SLAI. A Zn(2+)-binding site is contributed by histidine 145. The active site involves glutamate 146. Histidine 149 serves as a coordination point for Zn(2+). The next 2 membrane-spanning stretches (helical) occupy residues 156–176 and 195–215; these read VTLA…SRII and FFVT…IIVM. Glutamate 222 is a binding site for Zn(2+).

The protein belongs to the peptidase M48B family. Requires Zn(2+) as cofactor.

It is found in the cell inner membrane. The protein is Protease HtpX homolog of Thiobacillus denitrificans (strain ATCC 25259 / T1).